The following is a 420-amino-acid chain: Pyruvate dehydrogenase E1 component subunit alpha, mitochondrial (420 aa).

The transit peptide at 1–33 (MLAASFKRQPSQLVRGLGAVLRTPTRIGHVRTM) directs the protein to the mitochondrion. Pyruvate-binding residues include His112, Tyr138, Arg139, Ala177, Gly185, Val187, Asp216, Gly217, Ala218, Asn245, and Tyr247. Thiamine diphosphate is bound by residues Tyr138 and Arg139. Thiamine diphosphate-binding residues include Gly185, Val187, Asp216, Gly217, Ala218, and Asn245. Asp216 is a Mg(2+) binding site. 2 residues coordinate Mg(2+): Asn245 and Tyr247. Thiamine diphosphate is bound at residue His312. Ser313 is modified (phosphoserine; by PDK1 and PDK2).

As to quaternary structure, pyruvate dehydrogenase (E1) is a tetramer of 2 alpha and 2 beta subunits. Eukaryotic pyruvate dehydrogenase (PDH) complexes are organized as a core consisting of the oligomeric dihydrolipoamide acetyl-transferase (E2), around which are arranged multiple copies of pyruvate dehydrogenase (E1), dihydrolipoamide dehydrogenase (E3) and protein X (E3BP) bound by non-covalent bonds. Requires thiamine diphosphate as cofactor. Mg(2+) serves as cofactor. Phosphorylated at Ser-313 by pyruvate dehydrogenase kinases PKP1 (PDK1) and PKP2 (PDK2), and dephosphorylated by pyruvate dehydrogenase phosphatases PTC5 and PTC6.

Its subcellular location is the mitochondrion matrix. The enzyme catalyses N(6)-[(R)-lipoyl]-L-lysyl-[protein] + pyruvate + H(+) = N(6)-[(R)-S(8)-acetyldihydrolipoyl]-L-lysyl-[protein] + CO2. Its activity is regulated as follows. E1 activity is regulated by phosphorylation (inactivation) and dephosphorylation (activation) of the alpha subunit. Functionally, the pyruvate dehydrogenase complex catalyzes the overall conversion of pyruvate to acetyl-CoA and CO(2). The chain is Pyruvate dehydrogenase E1 component subunit alpha, mitochondrial (PDA1) from Saccharomyces cerevisiae (strain ATCC 204508 / S288c) (Baker's yeast).